Consider the following 1130-residue polypeptide: Putative beta-hexosaminidase (1130 aa).

The signal sequence occupies residues 1–23; sequence MKWVKSGVGILGILLIICHAVTS. 2 stretches are compositionally biased toward low complexity: residues 1001–1030 and 1037–1072; these read PGQM…LPAQ and LTGQ…QRTG. Disordered stretches follow at residues 1001–1075 and 1102–1130; these read PGQM…GVVP and QMRG…QQAG.

Belongs to the glycosyl hydrolase 20 family. Prismatic layer of shell (at protein level). Expressed primarily in the mantle with highest level in the mantle edge and lower level in the mantle pallium.

Its subcellular location is the secreted. The catalysed reaction is Hydrolysis of terminal non-reducing N-acetyl-D-hexosamine residues in N-acetyl-beta-D-hexosaminides.. It participates in glycan degradation; chitin degradation. The polypeptide is Putative beta-hexosaminidase (Pinctada maxima (Silver-lipped pearl oyster)).